Consider the following 759-residue polypeptide: ARF GTPase-activating protein GIT2 (759 aa).

The region spanning 1–124 is the Arf-GAP domain; the sequence is MSKRLRSNDV…AFVHRLPCRD (124 aa). Residues 11–34 form a C4-type zinc finger; the sequence is CADCSGPDPSWASVNRGTLICDEC. 3 ANK repeats span residues 132 to 161, 166 to 198, and 199 to 228; these read DLSK…QANF, KGST…THDS, and SGKT…ELTD. Disordered regions lie at residues 376 to 422 and 469 to 641; these read VSNQ…DLSD and QSEN…PSTE. Over residues 385–402 the composition is skewed to acidic residues; the sequence is QDNDQPDYDSVASDEDTD. Residues 451–478 adopt a coiled-coil conformation; the sequence is NNNLSGELRIMQKKLQTLQSENSSLRRQ. The span at 469–489 shows a compositional bias: polar residues; that stretch reads QSENSSLRRQATASACQVQTA. The span at 555-569 shows a compositional bias: low complexity; it reads TSSSSLPSFPSTLSW. A compositionally biased stretch (basic and acidic residues) spans 570–583; the sequence is SRDESTRRASRLEK.

May form heterooligomers with GIT1. Directly interacts with protein Piccolo/PCLO. Interacts with PPFIA1 and PPFIA2. Interacts with ARHGEF7. Identified in a complex with ARHGEF6 and BIN2. Interacts with PAK3. Interacts with PXN/paxillin. Interacts with TGFB1I1. Forms a complex with EFNB1 and GRB4/NCK2.

In terms of biological role, GTPase-activating protein for ADP ribosylation factor family members, including ARF1. The protein is ARF GTPase-activating protein GIT2 (Git2) of Rattus norvegicus (Rat).